A 757-amino-acid polypeptide reads, in one-letter code: Xylosyl- and glucuronyltransferase LARGE1 (757 aa).

The Cytoplasmic segment spans residues M1 to K10. A helical; Signal-anchor for type II membrane protein membrane pass occupies residues F11–S31. At A32 to S757 the chain is on the lumenal side. Residues A50–T82 adopt a coiled-coil conformation. The interval R76–C127 is disordered. Over residues T82–H97 the composition is skewed to low complexity. N-linked (GlcNAc...) asparagine glycosylation is found at N123 and N149. A xylosyltransferase activity region spans residues I139 to R414. The Mn(2+) site is built by D243 and D245. An N-linked (GlcNAc...) asparagine glycan is attached at N273. The glucuronyltransferase activity stretch occupies residues R415 to S757. 2 residues coordinate Mn(2+): D564 and D566. The N-linked (GlcNAc...) asparagine glycan is linked to N738.

In the C-terminal section; belongs to the glycosyltransferase 49 family. It in the N-terminal section; belongs to the glycosyltransferase 8 family. Mn(2+) serves as cofactor.

Its subcellular location is the golgi apparatus membrane. The enzyme catalyses 3-O-[beta-D-GlcA-(1-&gt;3)-beta-D-Xyl-(1-&gt;4)-Rib-ol-P-Rib-ol-P-3-beta-D-GalNAc-(1-&gt;3)-beta-D-GlcNAc-(1-&gt;4)-(O-6-P-alpha-D-Man)]-Thr-[protein] + UDP-alpha-D-xylose = 3-O-[alpha-D-Xyl-(1-&gt;3)-beta-D-GlcA-(1-&gt;4)-beta-D-Xyl-(1-&gt;4)-Rib-ol-P-Rib-ol-P-3-beta-D-GalNAc-(1-&gt;3)-beta-D-GlcNAc-(1-&gt;4)-(O-6-P-alpha-D-Man)]-Thr-[protein] + UDP + H(+). It catalyses the reaction 3-O-{(1-&gt;[3)-alpha-D-Xyl-(1-&gt;3)-beta-D-GlcA-(1-&gt;](n)-4)-beta-D-Xyl-(1-&gt;4)-Rib-ol-P-Rib-ol-P-3-beta-D-GalNAc-(1-&gt;3)-beta-D-GlcNAc-(1-&gt;4)-O-6-P-alpha-D-Man}-L-Thr-[protein] + UDP-alpha-D-glucuronate = 3-O-{beta-D-GlcA-(1-&gt;[3)-alpha-D-Xyl-(1-&gt;3)-beta-D-GlcA-(1-&gt;](n)-4)-beta-D-Xyl-(1-&gt;4)-Rib-ol-P-Rib-ol-P-3-beta-D-GalNAc-(1-&gt;3)-beta-D-GlcNAc-(1-&gt;4)-O-6-P-alpha-D-Man}-L-Thr-[protein] + UDP + H(+). The catalysed reaction is 3-O-{beta-D-GlcA-(1-&gt;[3)-alpha-D-Xyl-(1-&gt;3)-beta-D-GlcA-(1-&gt;](n)-4)-beta-D-Xyl-(1-&gt;4)-Rib-ol-P-Rib-ol-P-3-beta-D-GalNAc-(1-&gt;3)-beta-D-GlcNAc-(1-&gt;4)-O-6-P-alpha-D-Man}-L-Thr-[protein] + UDP-alpha-D-xylose = 3-O-{(1-&gt;[3)-alpha-D-Xyl-(1-&gt;3)-beta-D-GlcA-(1-&gt;](n+1)-4)-beta-D-Xyl-(1-&gt;4)-Rib-ol-P-Rib-ol-P-3-beta-D-GalNAc-(1-&gt;3)-beta-D-GlcNAc-(1-&gt;4)-O-6-P-alpha-D-Man}-L-Thr-[protein] + UDP + H(+). Its pathway is protein modification; protein glycosylation. Functionally, bifunctional glycosyltransferase with both alpha-1,3-xylosyltransferase and beta-1,3-glucuronyltransferase activities involved in the maturation of alpha-dystroglycan (DAG1) by glycosylation leading to DAG1 binding to laminin G-like domain-containing extracellular proteins with high affinity. Elongates the glucuronyl-beta-1,4-xylose-beta disaccharide primer structure initiated by B4GAT1 by adding repeating units [-3-Xylose-alpha-1,3-GlcA-beta-1-] to produce a heteropolysaccharide. Requires the phosphorylation of core M3 (O-mannosyl trisaccharide) by POMK to elongate the glucuronyl-beta-1,4-xylose-beta disaccharide primer. Plays a key role in skeletal muscle function and regeneration. This is Xylosyl- and glucuronyltransferase LARGE1 from Danio rerio (Zebrafish).